Here is a 148-residue protein sequence, read N- to C-terminus: MATTKIILKKSVNNLGHAGDIVEVKAGYARNYLIPQGYAFPWTKGAAAQAEAMKRARLAKAIATREGAVEAKQIIEGTAVEIFAKVSESGKLFGGISNEQIANALAEKVAVDPKGITVEKIQTLGEFPATVALHPEISANFFVKVVAE.

It belongs to the bacterial ribosomal protein bL9 family.

Binds to the 23S rRNA. This chain is Large ribosomal subunit protein bL9, found in Bifidobacterium animalis subsp. lactis (strain AD011).